The chain runs to 471 residues: Probable multidrug-efflux transporter MT1670 (471 aa).

Transmembrane regions (helical) follow at residues 23-43 (IVLA…ISLL), 55-75 (LYAW…TTVN), 91-111 (LAVF…QILV), 116-136 (LQGI…NSTL), 146-166 (ALVS…GGLF), 174-194 (WAFG…PVAL), 213-233 (VPVW…VAAL), 237-257 (LVQT…FVVV), 279-299 (IYLT…VPLF), 308-328 (PVAA…GEVA), 337-357 (VIGH…ALGA), 366-386 (VGII…IGIA), 410-430 (AINV…GVVV), and 438-458 (VAAA…GVIA).

This sequence belongs to the major facilitator superfamily.

The protein resides in the cell membrane. Its function is as follows. Could be involved in fluoroquinolones efflux. The protein is Probable multidrug-efflux transporter MT1670 of Mycobacterium tuberculosis (strain CDC 1551 / Oshkosh).